A 716-amino-acid chain; its full sequence is MPQLSKSLSFDGRDIRLELGLFAPQAGGSVLISSGDTAVLVAATRSTAREGIDFLPLTVDYEERMYAAGRIPGGFLRREGRPPERATLTSRLIDRPLRPLFPSWLRDDLQVVATTLSMDETVPPDVLAVTGASIATLVAKIPFYGPMAAVRVGLVGDDFIINPTYREIEKGDLDLVVAGTPAGVIMVEAGANQLPEADVIEAIDFGYEAVQELIKAQQSLLAELGIEQILPEAPNADNTLENFVRDRASSGVQQVLQHFSFTKSERDAALDEVKASVVEAIAALPEEDPVRSVTAAEPKALGNTFKALTKTLMRQQILRDGVRVDGRKLDQVRPISSQVGLLPPRVHGSGLFQRGLTQVLSIATLGTPGDAQELDDLHPDTQKRYLHHYNMPPYSVGETRPMRSPGRREIGHGALAERALLPVLPSKEEFPYVIRVVSEVLSSNGSTSMGSVCGSTLALMDAGVPIKKPVSGAAMGLIREGDEYRVLTDIQGIEDFLGDMDFKVAGTDQGITALQMDMKIHGLPLEIIADAINQAKPARLHILNKMLEAIATPRADLSTYAPRLFRIQINPEQIGLVIGPGGKTIRSITEQTGAKIDIEDTGAVTISAVDADSALRAKSIIEGMTRTITAGDVYIGKVTRIIPIGAFVEFLPGKEGMIHISQIADYRVARVEDELTVGDEVVVKVREIDQKGRVNLTRKGIDPEEVSAARAAVEAS.

Residues Asp-495 and Asp-501 each coordinate Mg(2+). Residues 562 to 621 (PRLFRIQINPEQIGLVIGPGGKTIRSITEQTGAKIDIEDTGAVTISAVDADSALRAKSII) enclose the KH domain. Residues 631–699 (GDVYIGKVTR…QKGRVNLTRK (69 aa)) enclose the S1 motif domain.

The protein belongs to the polyribonucleotide nucleotidyltransferase family. Mg(2+) is required as a cofactor.

The protein resides in the cytoplasm. It carries out the reaction RNA(n+1) + phosphate = RNA(n) + a ribonucleoside 5'-diphosphate. Involved in mRNA degradation. Catalyzes the phosphorolysis of single-stranded polyribonucleotides processively in the 3'- to 5'-direction. The sequence is that of Polyribonucleotide nucleotidyltransferase from Synechococcus elongatus (strain ATCC 33912 / PCC 7942 / FACHB-805) (Anacystis nidulans R2).